The following is a 248-amino-acid chain: Mannose-binding protein C (248 aa).

The first 20 residues, methionine 1–serine 20, serve as a signal peptide directing secretion. In terms of domain architecture, Collagen-like spans glycine 42–asparagine 99. The tract at residues isoleucine 43–serine 110 is disordered. Proline 47 is subject to 4-hydroxyproline. The segment covering lysine 49–glutamate 61 has biased composition (basic and acidic residues). Proline 73, proline 79, proline 82, and proline 88 each carry 4-hydroxyproline. The segment covering lysine 75–serine 87 has biased composition (pro residues). Residues arginine 112–leucine 130 adopt a coiled-coil conformation. The 112-residue stretch at valine 134 to glutamate 245 folds into the C-type lectin domain. 2 disulfides stabilise this stretch: cysteine 155-cysteine 244 and cysteine 222-cysteine 236.

In terms of assembly, oligomeric complex of 3 or more homotrimers. Interacts with MASP1 and MASP2. Interacts with MEP1A and MEP1B and may inhibit their catalytic activity. Post-translationally, hydroxylation on proline residues within the sequence motif, GXPG, is most likely to be 4-hydroxy as this fits the requirement for 4-hydroxylation in vertebrates.

The protein resides in the secreted. In terms of biological role, calcium-dependent lectin involved in innate immune defense. Binds mannose, fucose and N-acetylglucosamine on different microorganisms and activates the lectin complement pathway. Binds to late apoptotic cells, as well as to apoptotic blebs and to necrotic cells, but not to early apoptotic cells, facilitating their uptake by macrophages. This chain is Mannose-binding protein C (MBL2), found in Nomascus concolor (Black crested gibbon).